An 84-amino-acid chain; its full sequence is RNA-binding protein Hfq (84 aa).

One can recognise a Sm domain in the interval 9–68; that stretch reads DPYLNTLRKERVPVSIYLVNGIKLQGQIESFDQFVILLKNTVSQMVYKHAISTVVPSRPV.

It belongs to the Hfq family. As to quaternary structure, homohexamer.

Functionally, RNA chaperone that binds small regulatory RNA (sRNAs) and mRNAs to facilitate mRNA translational regulation in response to envelope stress, environmental stress and changes in metabolite concentrations. Also binds with high specificity to tRNAs. This chain is RNA-binding protein Hfq, found in Azotobacter vinelandii (strain DJ / ATCC BAA-1303).